Reading from the N-terminus, the 287-residue chain is Formamidopyrimidine-DNA glycosylase (287 aa).

Pro-2 functions as the Schiff-base intermediate with DNA in the catalytic mechanism. The active-site Proton donor is Glu-3. The active-site Proton donor; for beta-elimination activity is Lys-58. DNA contacts are provided by His-104, Arg-123, and Arg-166. An FPG-type zinc finger spans residues 251–287 (RTYDREGQPCRNDGCRGVIGREVQAGRSTFYCPVCQR). Residue Arg-277 is the Proton donor; for delta-elimination activity of the active site.

This sequence belongs to the FPG family. Monomer. Zn(2+) serves as cofactor.

The catalysed reaction is Hydrolysis of DNA containing ring-opened 7-methylguanine residues, releasing 2,6-diamino-4-hydroxy-5-(N-methyl)formamidopyrimidine.. It carries out the reaction 2'-deoxyribonucleotide-(2'-deoxyribose 5'-phosphate)-2'-deoxyribonucleotide-DNA = a 3'-end 2'-deoxyribonucleotide-(2,3-dehydro-2,3-deoxyribose 5'-phosphate)-DNA + a 5'-end 5'-phospho-2'-deoxyribonucleoside-DNA + H(+). Involved in base excision repair of DNA damaged by oxidation or by mutagenic agents. Acts as a DNA glycosylase that recognizes and removes damaged bases. Has a preference for oxidized purines, such as 7,8-dihydro-8-oxoguanine (8-oxoG). Has AP (apurinic/apyrimidinic) lyase activity and introduces nicks in the DNA strand. Cleaves the DNA backbone by beta-delta elimination to generate a single-strand break at the site of the removed base with both 3'- and 5'-phosphates. This is Formamidopyrimidine-DNA glycosylase from Phenylobacterium zucineum (strain HLK1).